The primary structure comprises 346 residues: Methionine import ATP-binding protein MetN 1 (346 aa).

The region spanning 2–241 (IEFKQVTKTF…PQHPTTEKFV (240 aa)) is the ABC transporter domain. Residue 38 to 45 (GFSGAGKS) coordinates ATP.

Belongs to the ABC transporter superfamily. Methionine importer (TC 3.A.1.24) family. As to quaternary structure, the complex is composed of two ATP-binding proteins (MetN), two transmembrane proteins (MetI) and a solute-binding protein (MetQ).

The protein localises to the cell membrane. The enzyme catalyses L-methionine(out) + ATP + H2O = L-methionine(in) + ADP + phosphate + H(+). It carries out the reaction D-methionine(out) + ATP + H2O = D-methionine(in) + ADP + phosphate + H(+). In terms of biological role, part of the ABC transporter complex MetNIQ involved in methionine import. Responsible for energy coupling to the transport system. The protein is Methionine import ATP-binding protein MetN 1 of Shouchella clausii (strain KSM-K16) (Alkalihalobacillus clausii).